The primary structure comprises 246 residues: Small ribosomal subunit protein uS2 (246 aa).

This sequence belongs to the universal ribosomal protein uS2 family.

This Exiguobacterium sp. (strain ATCC BAA-1283 / AT1b) protein is Small ribosomal subunit protein uS2.